The sequence spans 345 residues: Nicotinate-nucleotide--dimethylbenzimidazole phosphoribosyltransferase (345 aa).

E312 serves as the catalytic Proton acceptor.

It belongs to the CobT family.

It catalyses the reaction 5,6-dimethylbenzimidazole + nicotinate beta-D-ribonucleotide = alpha-ribazole 5'-phosphate + nicotinate + H(+). It functions in the pathway nucleoside biosynthesis; alpha-ribazole biosynthesis; alpha-ribazole from 5,6-dimethylbenzimidazole: step 1/2. Functionally, catalyzes the synthesis of alpha-ribazole-5'-phosphate from nicotinate mononucleotide (NAMN) and 5,6-dimethylbenzimidazole (DMB). This chain is Nicotinate-nucleotide--dimethylbenzimidazole phosphoribosyltransferase, found in Phocaeicola vulgatus (strain ATCC 8482 / DSM 1447 / JCM 5826 / CCUG 4940 / NBRC 14291 / NCTC 11154) (Bacteroides vulgatus).